Reading from the N-terminus, the 426-residue chain is Branched-chain amino acid permease BrnQ (426 aa).

The next 12 helical transmembrane spans lie at 11–31, 41–61, 76–96, 111–131, 140–160, 186–206, 219–239, 268–288, 296–316, 324–344, 358–378, and 390–410; these read LMLF…MLGL, ILGF…AVVL, IFGL…YALP, NALY…ALSW, LGKW…VLSV, GYMT…ISAF, VVSA…LGSI, IMFV…LISA, LLPG…SFGV, VLAV…TLVF, TYLF…IPAL, and MSLG…AIDW.

Belongs to the branched chain amino acid transporter family.

It is found in the cell membrane. Its function is as follows. Branched chain amino acid transport system, which transports isoleucine. The polypeptide is Branched-chain amino acid permease BrnQ (Corynebacterium glutamicum (strain ATCC 13032 / DSM 20300 / JCM 1318 / BCRC 11384 / CCUG 27702 / LMG 3730 / NBRC 12168 / NCIMB 10025 / NRRL B-2784 / 534)).